Here is a 917-residue protein sequence, read N- to C-terminus: Major intrinsically disordered Notch2-binding receptor 1 (917 aa).

Over 1 to 892 (MEANQEASLF…AEFRRAKVCK (892 aa)) the chain is Cytoplasmic. Disordered regions lie at residues 337-367 (STYF…WPAK), 389-410 (SEEK…GPDR), 457-476 (DKSI…SVGT), 568-588 (ITNG…NVHH), 652-679 (SEAP…LENS), 706-727 (TRPS…IASI), and 746-783 (NEEE…LPKQ). The segment covering 460–476 (ISCTSGQHSSDTSSVGT) has biased composition (polar residues). Over residues 576-588 (KGDKCNRPENVHH) the composition is skewed to basic and acidic residues. S712 is modified (phosphoserine). The helical transmembrane segment at 893–913 (IAALITAAACTVILVIVVPIC) threads the bilayer. At 914–917 (TMKS) the chain is on the extracellular side.

It belongs to the MINAR family. Interacts with NOTCH2; this interaction increases MINAR1 stability. Interacts (via N-terminus) with DEPTOR (via PDZ domain); this interaction may stabilize DEPTOR protein by impairing its ubiquitination.

The protein resides in the cell membrane. In terms of biological role, intrinsically disordered protein which may negatively regulate mTOR signaling pathway by stabilizing the mTOR complex component DEPTOR. Negatively regulates angiogenesis. Negatively regulates cell growth. Negatively regulates neurite outgrowth in hippocampal neurons. The protein is Major intrinsically disordered Notch2-binding receptor 1 (Minar1) of Rattus norvegicus (Rat).